The sequence spans 151 residues: Group 10 secretory phospholipase A2 (151 aa).

The first 17 residues, M1 to S17, serve as a signal peptide directing secretion. Residues E18 to R28 constitute a propeptide that is removed on maturation. Intrachain disulfides connect C39–C97, C53–C143, C55–C71, C70–C125, C76–C150, C77–C118, C86–C111, and C104–C116. Positions 54, 56, and 58 each coordinate Ca(2+). H74 is a catalytic residue. D75 contacts Ca(2+). The active site involves D119.

The protein belongs to the phospholipase A2 family. As to quaternary structure, interacts with PLA2R1; this interaction mediates PLA2G10 clearance and inactivation. It depends on Ca(2+) as a cofactor.

It localises to the secreted. Its subcellular location is the lysosome. The protein resides in the cytoplasmic vesicle. It is found in the secretory vesicle. The protein localises to the acrosome. The enzyme catalyses a 1,2-diacyl-sn-glycero-3-phosphocholine + H2O = a 1-acyl-sn-glycero-3-phosphocholine + a fatty acid + H(+). It catalyses the reaction 1-hexadecanoyl-2-(9Z-octadecenoyl)-sn-glycero-3-phosphocholine + H2O = 1-hexadecanoyl-sn-glycero-3-phosphocholine + (9Z)-octadecenoate + H(+). It carries out the reaction 1-octadecanoyl-2-(5Z,8Z,11Z,14Z-eicosatetraenoyl)-sn-glycero-3-phosphocholine + H2O = 1-octadecanoyl-sn-glycero-3-phosphocholine + (5Z,8Z,11Z,14Z)-eicosatetraenoate + H(+). The catalysed reaction is 1,2-dihexadecanoyl-sn-glycero-3-phosphocholine + H2O = 1-hexadecanoyl-sn-glycero-3-phosphocholine + hexadecanoate + H(+). The enzyme catalyses 1-hexadecanoyl-2-(9Z-octadecenoyl)-sn-glycero-3-phosphoglycerol + H2O = 1-hexadecanoyl-sn-glycero-3-phosphoglycerol + (9Z)-octadecenoate + H(+). It catalyses the reaction 1,2-dihexadecanoyl-sn-glycero-3-phospho-(1'-sn-glycerol) + H2O = 1-hexadecanoyl-sn-glycero-3-phospho-(1'-sn-glycerol) + hexadecanoate + H(+). It carries out the reaction 1-hexadecanoyl-2-(9Z-octadecenoyl)-sn-glycero-3-phospho-L-serine + H2O = 1-hexadecanoyl-sn-glycero-3-phospho-L-serine + (9Z)-octadecenoate + H(+). The catalysed reaction is 1-hexadecanoyl-2-(9Z,12Z-octadecadienoyl)-sn-glycero-3-phosphoethanolamine + H2O = 1-hexadecanoyl-sn-glycero-3-phosphoethanolamine + (9Z,12Z)-octadecadienoate + H(+). The enzyme catalyses 1-hexadecanoyl-2-(9Z-octadecenoyl)-sn-glycero-3-phosphate + H2O = 1-hexadecanoyl-sn-glycero-3-phosphate + (9Z)-octadecenoate + H(+). It catalyses the reaction 1-O-hexadecyl-2-acetyl-sn-glycero-3-phosphocholine + H2O = 1-O-hexadecyl-sn-glycero-3-phosphocholine + acetate + H(+). In terms of biological role, secretory calcium-dependent phospholipase A2 that primarily targets extracellular phospholipids. Hydrolyzes the ester bond of the fatty acyl group attached at sn-2 position of phospholipids with preference for phosphatidylcholines and phosphatidylglycerols over phosphatidylethanolamines. Preferentially releases sn-2 omega-6 and omega-3 polyunsaturated fatty acyl (PUFA) chains over saturated fatty acyls. Contributes to phospholipid remodeling of very low-density lipoprotein (VLDL), low-density lipoprotein (LDL) and high-density lipoprotein (HDL) particles. Hydrolyzes LDL phospholipids releasing unsaturated fatty acids that regulate macrophage differentiation toward foam cells. Efficiently hydrolyzes and inactivates platelet activating factor (PAF), a potent lipid mediator present in oxidized LDL. May act in an autocrine and paracrine manner. Secreted by lung epithelium, targets membrane phospholipids of infiltrating eosinophils, releasing arachidonate and boosting eicosanoid and cysteinyl leukotriene synthesis involved in airway inflammatory response. Secreted by gut epithelium, hydrolyzes dietary and biliary phosphatidylcholines in the gastrointestinal lumen. Plays a stem cell regulator role in colon epithelium. Within intracellular compartment, mediates Paneth-like cell differentiation and its stem cell supporting functions by inhibiting the Wnt signaling pathway in intestinal stem cell (ISC). Secreted in the intestinal lumen upon inflammation, acts in an autocrine way and promotes prostaglandin E2 synthesis that stimulates Wnt signaling pathway in ISCs and tissue regeneration. May participate in hair follicle morphogenesis by regulating phosphatidylethanolamines metabolism at the outermost epithelial layer and facilitating melanin synthesis. By releasing lysophosphatidylcholines (LPCs) at sperm acrosome, controls sperm cell capacitation, acrosome reaction and overall fertility. May promote neurite outgrowth in neuron fibers involved in nociception. Contributes to lipid remodeling of cellular membranes and generation of lipid mediators involved in pathogen clearance. Cleaves sn-2 fatty acyl chains of phosphatidylglycerols and phosphatidylethanolamines, which are major components of membrane phospholipids in bacteria. Displays bactericidal activity against Gram-positive bacteria by directly hydrolyzing phospholipids of the bacterial membrane. In pulmonary epithelium, may contribute to host defense response against adenoviral infection. Prevents adenovirus entry into host cells by hydrolyzing host cell plasma membrane, releasing C16:0 LPCs that inhibit virus-mediated membrane fusion and viral infection. Likely prevents adenoviral entry into the endosomes of host cells. May play a role in maturation and activation of innate immune cells including macrophages, group 2 innate lymphoid cells and mast cells. The polypeptide is Group 10 secretory phospholipase A2 (Pla2g10) (Rattus norvegicus (Rat)).